The following is a 786-amino-acid chain: Spermatogenesis-associated protein 20 (786 aa).

A signal peptide spans M1–A22. Positions A23–V61 are disordered. S649 bears the Phosphoserine mark.

The protein localises to the secreted. Its function is as follows. May play a role in fertility regulation. This Homo sapiens (Human) protein is Spermatogenesis-associated protein 20 (SPATA20).